Reading from the N-terminus, the 252-residue chain is 3-deoxy-manno-octulosonate cytidylyltransferase (252 aa).

Belongs to the KdsB family.

The protein localises to the cytoplasm. It catalyses the reaction 3-deoxy-alpha-D-manno-oct-2-ulosonate + CTP = CMP-3-deoxy-beta-D-manno-octulosonate + diphosphate. The protein operates within nucleotide-sugar biosynthesis; CMP-3-deoxy-D-manno-octulosonate biosynthesis; CMP-3-deoxy-D-manno-octulosonate from 3-deoxy-D-manno-octulosonate and CTP: step 1/1. It functions in the pathway bacterial outer membrane biogenesis; lipopolysaccharide biosynthesis. In terms of biological role, activates KDO (a required 8-carbon sugar) for incorporation into bacterial lipopolysaccharide in Gram-negative bacteria. The protein is 3-deoxy-manno-octulosonate cytidylyltransferase of Xylella fastidiosa (strain Temecula1 / ATCC 700964).